We begin with the raw amino-acid sequence, 509 residues long: GRAS family protein RAD1 (509 aa).

The GRAS domain occupies 125–508 (EDGCADGMRL…KPIVAASCWK (384 aa)). The leucine repeat I (LRI) stretch occupies residues 132 to 198 (MRLVQLLIAC…IQPIGSGAGV (67 aa)). The interval 217–286 (YRLVYETCPH…SGHGRVRRLR (70 aa)) is VHIID. Positions 248–252 (VHVVD) match the VHIID motif. The leucine repeat II (LRII) stretch occupies residues 299 to 331 (AIGDELSDYANNLGINLEFSVVQKNLENLQPED). The segment at 340–431 (LVVNSILQLH…QFYFAEEIKN (92 aa)) is PFYRE. The segment at 434–508 (SCEGPLRMER…KPIVAASCWK (75 aa)) is SAW.

This sequence belongs to the GRAS family. As to quaternary structure, interacts with RAM1 and NSP2. In terms of tissue distribution, expressed in roots under low phosphate (Pi) conditions.

It localises to the nucleus. Its function is as follows. Transcription factor acting as a regulator of arbuscular mycorrhiza (AM)-related genes (e.g. PT4, STR and RAM2). Required for the morphogenesis of arbuscules upon symbiosis with AM fungi (e.g. Rhizophagus irregularis). Also involved in restricting mycorrhizal colonization of the root meristem. The chain is GRAS family protein RAD1 from Lotus japonicus (Lotus corniculatus var. japonicus).